The chain runs to 155 residues: Endoribonuclease YbeY (155 aa).

Positions 113, 117, and 123 each coordinate Zn(2+).

Belongs to the endoribonuclease YbeY family. The cofactor is Zn(2+).

It is found in the cytoplasm. Single strand-specific metallo-endoribonuclease involved in late-stage 70S ribosome quality control and in maturation of the 3' terminus of the 16S rRNA. The protein is Endoribonuclease YbeY of Ureaplasma parvum serovar 3 (strain ATCC 27815 / 27 / NCTC 11736).